The sequence spans 160 residues: Phosphatidylinositol N-acetylglucosaminyltransferase subunit gpi15 (160 aa).

Helical transmembrane passes span 22-42 (GTQMFALCFISFVIGATSLAI) and 48-68 (IIITLVELSFLLSLFHIISGV).

This sequence belongs to the PIGH family.

It localises to the endoplasmic reticulum membrane. The catalysed reaction is a 1,2-diacyl-sn-glycero-3-phospho-(1D-myo-inositol) + UDP-N-acetyl-alpha-D-glucosamine = a 6-(N-acetyl-alpha-D-glucosaminyl)-1-(1,2-diacyl-sn-glycero-3-phospho)-1D-myo-inositol + UDP + H(+). Its pathway is glycolipid biosynthesis; glycosylphosphatidylinositol-anchor biosynthesis. Its function is as follows. Part of the complex catalyzing the transfer of N-acetylglucosamine from UDP-N-acetylglucosamine to phosphatidylinositol, the first step of GPI biosynthesis. The protein is Phosphatidylinositol N-acetylglucosaminyltransferase subunit gpi15 (gpi15) of Schizosaccharomyces pombe (strain 972 / ATCC 24843) (Fission yeast).